The primary structure comprises 194 residues: Peptidyl-tRNA hydrolase (194 aa).

Residue Tyr17 coordinates tRNA. His22 serves as the catalytic Proton acceptor. Phe68, Asn70, and Asn116 together coordinate tRNA.

It belongs to the PTH family. In terms of assembly, monomer.

The protein localises to the cytoplasm. It carries out the reaction an N-acyl-L-alpha-aminoacyl-tRNA + H2O = an N-acyl-L-amino acid + a tRNA + H(+). In terms of biological role, hydrolyzes ribosome-free peptidyl-tRNAs (with 1 or more amino acids incorporated), which drop off the ribosome during protein synthesis, or as a result of ribosome stalling. Catalyzes the release of premature peptidyl moieties from peptidyl-tRNA molecules trapped in stalled 50S ribosomal subunits, and thus maintains levels of free tRNAs and 50S ribosomes. This is Peptidyl-tRNA hydrolase from Histophilus somni (strain 129Pt) (Haemophilus somnus).